The chain runs to 270 residues: Elongation factor Ts (270 aa).

The tract at residues 81 to 84 is involved in Mg(2+) ion dislocation from EF-Tu; it reads TDFV.

This sequence belongs to the EF-Ts family.

The protein resides in the cytoplasm. Its function is as follows. Associates with the EF-Tu.GDP complex and induces the exchange of GDP to GTP. It remains bound to the aminoacyl-tRNA.EF-Tu.GTP complex up to the GTP hydrolysis stage on the ribosome. This Wigglesworthia glossinidia brevipalpis protein is Elongation factor Ts.